A 362-amino-acid chain; its full sequence is MKASLRLRLDQLCDRHEELTALLADAEVISDNKRFRKLSREHSDLTEITEVWGKYRQAEEDIETAEMMKSDPDFKDMAEEEIQANKVLLEELESQLNILMIPKDPNDSNAAYLEIRAGTGGDEAAIFSGDLFRMYSKYAESQGWRIEVLSENEGEHGGFKEVICRVDGDGVYGRLKFESGAHRVQRVPATESQGRVHTSACTVAILPEIDVDTNVEINPADLRIDTYRASGAGGQHINKTDSAVRITHIPTGTVVECQEERSQHKNKAKAMALLVSRLENAKRAAADAATSEMRRDLVGSGDRSERIRTYNYPQGRMTDHRINLTLYKLDAIMEGDLTELLDSLHREYQADQLAMLAQENGG.

At Q235 the chain carries N5-methylglutamine.

The protein belongs to the prokaryotic/mitochondrial release factor family. In terms of processing, methylated by PrmC. Methylation increases the termination efficiency of RF1.

It is found in the cytoplasm. In terms of biological role, peptide chain release factor 1 directs the termination of translation in response to the peptide chain termination codons UAG and UAA. The protein is Peptide chain release factor 1 of Acinetobacter baumannii (strain AYE).